The primary structure comprises 488 residues: DELTA-alicitoxin-Pse2b (488 aa).

The signal sequence occupies residues 1 to 21; the sequence is MSKPIIFLLTAFVVLTDLGAT. Residues 24–344 enclose the MACPF domain; the sequence is TEKVEVKAKP…GYLNFDCAYE (321 aa). Residues 369–398 enclose the EGF-like domain; it reads VCKLGPEGCHSDDDCESDDLIYCACCGDSC. Disulfide bonds link Cys-370/Cys-383, Cys-377/Cys-391, and Cys-393/Cys-398.

It localises to the secreted. Its subcellular location is the nematocyst. Its function is as follows. Causes lethal toxicity to the shrimp Palaemon paucidence, and hemolytic activity toward sheep red blood cells. The polypeptide is DELTA-alicitoxin-Pse2b (Phyllodiscus semoni (Night anemone)).